Consider the following 60-residue polypeptide: Temporin-CG1 (60 aa).

An N-terminal signal peptide occupies residues 1–22 (MFTLKKSLLLLFFLATINLSLC). The propeptide at 23 to 43 (EQERNAEEERRDDDERNAEVE) is removed in mature form.

Expressed by the skin glands.

It is found in the secreted. In terms of biological role, antimicrobial peptide active against a variety of Gram-positive and some Gram-negative bacterial strains. Has antifungal activity against a slime mold isolate. Has weak hemolytic activity against human erythrocytes. This Amolops chunganensis (Chungan torrent frog) protein is Temporin-CG1.